We begin with the raw amino-acid sequence, 285 residues long: Tropomyosin alpha-3 chain (285 aa).

A coiled-coil region spans residues 1–285; the sequence is MMEAIKKKMQ…DHALNDMTSI (285 aa). An N-acetylmethionine modification is found at methionine 2. At methionine 2 the chain carries N-acetylalanine. Threonine 54 is subject to Phosphothreonine. Phosphoserine is present on residues serine 62 and serine 88. Threonine 109 is modified (phosphothreonine). 2 positions are modified to phosphoserine: serine 207 and serine 216. Isoleucine 228 carries the N6-acetyllysine modification. Threonine 253 carries the phosphothreonine modification. Tyrosine 262 carries the phosphotyrosine modification. Serine 272 is modified (phosphoserine). Threonine 283 is modified (phosphothreonine). Serine 284 is modified (phosphoserine).

It belongs to the tropomyosin family. Homodimer. Heterodimer of an alpha (TPM1, TPM3 or TPM4) and a beta (TPM2) chain. Interacts with TMOD1. Interacts with TNNT1.

The protein localises to the cytoplasm. The protein resides in the cytoskeleton. Functionally, binds to actin filaments in muscle and non-muscle cells. Plays a central role, in association with the troponin complex, in the calcium dependent regulation of vertebrate striated muscle contraction. Smooth muscle contraction is regulated by interaction with caldesmon. In non-muscle cells is implicated in stabilizing cytoskeleton actin filaments. The polypeptide is Tropomyosin alpha-3 chain (Tpm3) (Mus musculus (Mouse)).